Here is a 124-residue protein sequence, read N- to C-terminus: Large ribosomal subunit protein uL18 (124 aa).

It belongs to the universal ribosomal protein uL18 family. In terms of assembly, part of the 50S ribosomal subunit; part of the 5S rRNA/L5/L18/L25 subcomplex. Contacts the 5S and 23S rRNAs.

In terms of biological role, this is one of the proteins that bind and probably mediate the attachment of the 5S RNA into the large ribosomal subunit, where it forms part of the central protuberance. This is Large ribosomal subunit protein uL18 from Koribacter versatilis (strain Ellin345).